The primary structure comprises 198 residues: Na(+)-translocating NADH-quinone reductase subunit E (198 aa).

6 consecutive transmembrane segments (helical) span residues 11-31 (AVFIENMALSFFLGMCTFLAV), 35-55 (VSPAFGLGIAVTFVLGIAVPV), 77-97 (FLNFITFIGVIAGLVQILEMV), 110-130 (GIFLPLIAVNCAIFGGVSFMV), 140-160 (IVYGFGSGLGWMLAIVALAGL), and 176-196 (LGITFISVGLMALGFMSFSGI).

It belongs to the NqrDE/RnfAE family. Composed of six subunits; NqrA, NqrB, NqrC, NqrD, NqrE and NqrF.

The protein localises to the cell inner membrane. The catalysed reaction is a ubiquinone + n Na(+)(in) + NADH + H(+) = a ubiquinol + n Na(+)(out) + NAD(+). Its function is as follows. NQR complex catalyzes the reduction of ubiquinone-1 to ubiquinol by two successive reactions, coupled with the transport of Na(+) ions from the cytoplasm to the periplasm. NqrA to NqrE are probably involved in the second step, the conversion of ubisemiquinone to ubiquinol. This is Na(+)-translocating NADH-quinone reductase subunit E from Haemophilus influenzae (strain ATCC 51907 / DSM 11121 / KW20 / Rd).